The following is a 691-amino-acid chain: MGQALSIKSCDFHAAENNEEHYTKAISSQHLTLRRGQSFTITLNFRAPTHTFLSALKKVALIAQTGEQPSKINKTQAIFPISSLGDQKGWSAAVEERDAQHWTVSVTTPVDAVIGHYSLLLQVSGKKQYPLGQFTLLFNPWNRDDAVFLQNEAERTEYVLNQNGFIYLGTADCIQEEPWDFGQFEKDVMDLSLKLLSMDKQVKDWNQPAHVARVVGALLHALKKKSVLPISQTQAAQEGALLYKRRGSVPILRQWLTGQGRAVYETQAWVSAAVACTVLRCLGIPARVVTTFDSAQGTVGSLLVDEYYNEEGLQNGEGQRGHIWVFQTSVECWMNRPDLSQGYGGWQILHPRAPNGAGVLGSCSLVPVRAVKEGELQLDPAVPELFAAVNASCVVWKCCEDGKLELTNSNRKDVGNCISTKVVGSDRCEDITQNYKYPAGSLQEKEVLEKVQKERLKLGKDNGMCPPSCEPWDPLHMFFEASSSIPLSGDGQLSVTLINPTDEEKKVHLVIGAQALYYNGVLAAGLWSKKQLFMLKPNQVMRLSTNLSFSCFEQTPPENSFLRVTAMARYSHTSLSCFAQENMAIGKPDLIIEMPKRAAQYRPLTVSVRMHNSLEAPMQNCIISIFGRGLIHREKRYGLGSLWPGSSLHTQFQFTPTHLGLQRLTVEVDCDMFQNLTGYRSVLVVAPEVSV.

A lipid anchor (N-myristoyl glycine) is attached at glycine 2. A band 3 binding region spans residues 31–39 (LTLRRGQSF). Serine 248 is subject to Phosphoserine. Residue tyrosine 570 is modified to Phosphotyrosine.

This sequence belongs to the transglutaminase superfamily. Transglutaminase family. In terms of assembly, component of the ankyrin-1 complex in the erythrocyte, composed of ANK1, RHCE, RHAG, SLC4A1, EPB42, GYPA, GYPB and AQP1. Interacts with SLC4A1 (via the cytoplasmic domain); this interaction is mediated by the SLC4A1 Band 3-I dimer. Interacts with ANK1 (via ANK 1-13 repeats). Interacts with AQP1 (via the C-terminal).

The protein resides in the cell membrane. It is found in the cytoplasm. It localises to the cytoskeleton. Component of the ankyrin-1 complex, a multiprotein complex involved in the stability and shape of the erythrocyte membrane. The protein is Protein 4.2 of Mus musculus (Mouse).